Here is a 933-residue protein sequence, read N- to C-terminus: Isoleucine--tRNA ligase (933 aa).

A 'HIGH' region motif is present at residues P57–H67. E554 serves as a coordination point for L-isoleucyl-5'-AMP. The 'KMSKS' region motif lies at K595–S599. ATP is bound at residue K598.

It belongs to the class-I aminoacyl-tRNA synthetase family. IleS type 1 subfamily. Monomer.

The protein localises to the cytoplasm. The catalysed reaction is tRNA(Ile) + L-isoleucine + ATP = L-isoleucyl-tRNA(Ile) + AMP + diphosphate. In terms of biological role, catalyzes the attachment of isoleucine to tRNA(Ile). As IleRS can inadvertently accommodate and process structurally similar amino acids such as valine, to avoid such errors it has two additional distinct tRNA(Ile)-dependent editing activities. One activity is designated as 'pretransfer' editing and involves the hydrolysis of activated Val-AMP. The other activity is designated 'posttransfer' editing and involves deacylation of mischarged Val-tRNA(Ile). The protein is Isoleucine--tRNA ligase of Streptococcus pyogenes serotype M28 (strain MGAS6180).